The sequence spans 533 residues: Probable lipid II flippase MurJ (533 aa).

13 helical membrane-spanning segments follow: residues 25–45, 90–110, 131–151, 158–178, 192–212, 233–253, 274–294, 316–336, 350–370, 389–409, 412–432, 449–469, and 484–504; these read ETLMAAALGTGPMADVFYAAF, VLFSVLLLITIVMELAMPLLV, LAAVMFPYLMSMSLTAMMSGM, FFAAAVAPIFLNLVMISALFY, YLSWSVLVAGVLQLAVVYIGV, LLLLAIPAAITGGVTQINLVI, IYQLPLGVVGVAVGIVLLPEL, FVLFLTLPAAVALWLLSDDII, TTLVGSILAIFGLGLPAFVLI, YTAIAVAVNSALSILLFPVLA, GIALAEAVAGWLNAVQLFVTL, AMLLVSSAVMGGVIVYLSHRW, and GVLGLLILIAMAVYFIVAFLI.

This sequence belongs to the MurJ/MviN family.

The protein localises to the cell inner membrane. It functions in the pathway cell wall biogenesis; peptidoglycan biosynthesis. Functionally, involved in peptidoglycan biosynthesis. Transports lipid-linked peptidoglycan precursors from the inner to the outer leaflet of the cytoplasmic membrane. This Rhizobium tropici protein is Probable lipid II flippase MurJ.